The sequence spans 576 residues: Sodium/hydrogen exchanger 8 (576 aa).

The next 11 membrane-spanning stretches (helical) occupy residues 55–75, 79–99, 118–138, 151–171, 186–206, 256–276, 306–326, 349–369, 374–394, 412–432, and 446–466; these read MTIF…HLLI, LHFL…GAVI, PNMF…YSLH, LFAV…IYFL, FAFG…IFNA, LGYF…TGLI, GLAE…GIVM, VAFL…FSFP, ISFV…NIFP, MFIM…SLHL, and TTIV…MPLI. Position 505 is a phosphothreonine (Thr-505). A phosphoserine mark is found at Ser-566 and Ser-568.

Belongs to the monovalent cation:proton antiporter 1 (CPA1) transporter (TC 2.A.36) family. Predominantly expressed in the liver, skeletal muscle, kidney, and testis. Expressed in both renal cortex and medulla. Detected throughout the entire gastrointestinal tract, with high expression detected in stomach, duodenum and ascending colon. In gastric epithelium; expressed in the glands within the fundus and pylorus regions.

It is found in the golgi apparatus membrane. The protein resides in the golgi apparatus. Its subcellular location is the trans-Golgi network membrane. The protein localises to the endosome. It localises to the multivesicular body membrane. It is found in the apical cell membrane. The protein resides in the cytoplasmic vesicle. Its subcellular location is the secretory vesicle. The protein localises to the acrosome. The enzyme catalyses Na(+)(in) + H(+)(out) = Na(+)(out) + H(+)(in). Na(+)/H(+) antiporter. Mediates the electoneutral exchange of intracellular H(+) ions for extracellular Na(+) in 1:1 stoichiometry. Acts as an Na(+)/H(+) exchanger in the trans-Golgi. Contributes to the regulation of pH regulation of Golgi apparatus, and consequently, in protein trafficking and endosomal morphology. Plays a crucial role in germ cells in acrosome biogenesis and sperm development, probably by playing a role in the fusion of the Golgi-derived vesicles that form the acrosomal cap. Can also be active at the cell surface of specialized cells. In the small intestine, plays a major physiological role in transepithelial absorption of Na(+). Regulates intracellular pH homeostasis of intestinal epithelial cells. Acts as an important regulator of mucosal integrity in the intestine and in the stomach, could mediate the pH fluctuation necessary for mucin exocytosis or assist membrane trafficking of other proteins. Plays a role in photoreceptor survival and in the maintenance of intracellular pH homeostasis in retinal pigment epithelium (RPE cells). This Mus musculus (Mouse) protein is Sodium/hydrogen exchanger 8 (Slc9a8).